Here is a 465-residue protein sequence, read N- to C-terminus: 3-isopropylmalate dehydratase large subunit (465 aa).

[4Fe-4S] cluster-binding residues include Cys347, Cys407, and Cys410.

Belongs to the aconitase/IPM isomerase family. LeuC type 1 subfamily. Heterodimer of LeuC and LeuD. The cofactor is [4Fe-4S] cluster.

It carries out the reaction (2R,3S)-3-isopropylmalate = (2S)-2-isopropylmalate. The protein operates within amino-acid biosynthesis; L-leucine biosynthesis; L-leucine from 3-methyl-2-oxobutanoate: step 2/4. Catalyzes the isomerization between 2-isopropylmalate and 3-isopropylmalate, via the formation of 2-isopropylmaleate. The polypeptide is 3-isopropylmalate dehydratase large subunit (Buchnera aphidicola subsp. Pemphigus spyrothecae).